The following is a 161-amino-acid chain: Serine-protein kinase RsbW (161 aa).

It belongs to the anti-sigma-factor family.

It carries out the reaction L-seryl-[protein] + ATP = O-phospho-L-seryl-[protein] + ADP + H(+). The catalysed reaction is L-threonyl-[protein] + ATP = O-phospho-L-threonyl-[protein] + ADP + H(+). Functionally, negative regulator of sigma-B activity. Phosphorylates and inactivates its specific antagonist protein, RsbV. Upon phosphorylation of RsbV, RsbW is released and binds to sigma-B, thereby blocking its ability to form an RNA polymerase holoenzyme (E-sigma-B). This is Serine-protein kinase RsbW from Bacillus licheniformis (strain ATCC 14580 / DSM 13 / JCM 2505 / CCUG 7422 / NBRC 12200 / NCIMB 9375 / NCTC 10341 / NRRL NRS-1264 / Gibson 46).